Reading from the N-terminus, the 230-residue chain is Orotidine 5'-phosphate decarboxylase (230 aa).

Residues aspartate 10, lysine 32, 59–68 (DLKYHDIPNT), threonine 119, arginine 180, glutamine 189, glycine 209, and arginine 210 contribute to the substrate site. Catalysis depends on lysine 61, which acts as the Proton donor.

Belongs to the OMP decarboxylase family. Type 1 subfamily. Homodimer.

The catalysed reaction is orotidine 5'-phosphate + H(+) = UMP + CO2. It functions in the pathway pyrimidine metabolism; UMP biosynthesis via de novo pathway; UMP from orotate: step 2/2. Catalyzes the decarboxylation of orotidine 5'-monophosphate (OMP) to uridine 5'-monophosphate (UMP). The polypeptide is Orotidine 5'-phosphate decarboxylase (Haemophilus influenzae (strain PittEE)).